A 1137-amino-acid polypeptide reads, in one-letter code: MNDMAKPLPTPPTAEIRKSRSNSPKKAQKTNLSPNKNQNNEKNVPRSNGRTKNEHNSMDDEEFEFFHQFSREKVKGVIHVITAELKEKGPDVEFLMIPFRPEQTNDKLLTLLNQLFPLGNGQPVNEKKQLRIVSKADVWTLFQCLKYIWCRLPNSEIIGWKSYLEFKFREEDKKFPRKSFLEIMPQCLASPNHASIVYDFFDLIISISSNSRVNKMSARKISKMCAIWAFSKQIPNSDIQDYDFESAAMKSFAPNNSIQDGLDQWIPASDAMFHLLLAFLRSFVPQDLESAKLPRTLKSLLFNNQYPPRKSTAYTSETILTIPLVTLKTDVFSRKPWQLLERCNDLLDFSDHDAFEAREDYALLKSLFRKKNTVEGISRKMSQESRRLMKAMSTKHSTFQPGWAPRECIENISHLKECIEVKRLDIDDYFIWTWLSSLSFEQTSEKKKIFGRSIILEFEFDGFKKWVVFQECDITLDYNKKGQLKKKTSAQSPTTEKELPPDDFELEDPPLSKSPTLSQTYKKFQAEVPQQSTVRRDSAPDNQGIYHTVISKNALTKNKHNVNLHSFEHKISKWNPLNNLRKKSGSNSSSSSFEEKSKDAPIREEYHTNKNHKSKKEERVLSQFSTLNPDEYQLPVIETGSSNFKIEIPELMYEHDDDDSDKLKNSQKRATDSAIEELNGMVEEMMINEPDDVKISITEAETFESLTKFDQYKPSNITDDDLQSSHSSAVHSLKLSTNTNDSCADSSKYTADRKLAEPRKISEESKVNDDSSSYYSPNINNLPASRMPSQPTYSNSDSKKAFTNESRLNVLQGAVSPSQQVTPKPYKNAPGDCVSPVQQKYYQNDRRNEMSPASAPVPPSAYSPARSPQFSTNSAGFKQNTINVPVGYNDPAHVLANQPHMTYRDQHNYPSHQQKQRPFQNNIVPPELKSRNQRADASPIPQHMVPVKQGVPNLPSNVPLYQQMERMNPNHQHPVNTYKVTQPPYHNNTTNAYGNSRAGNAHMLDGKWSNNPPQMVPKGVRPNQYPQQHVNRYSPQAQPVVPAEYYNGPPPMRAPPMMSHMVPAQEPIRYTAGANRRSFPQGMQQNAYSVPAQPMGAVNSEFYLPEAPQGNKLHGNINKRQERKKLYDNIRSGNFGI.

2 disordered regions span residues 1–59 (MNDM…NSMD) and 483–520 (QLKKKTSAQSPTTEKELPPDDFELEDPPLSKSPTLSQT). A compositionally biased stretch (polar residues) spans 21–50 (SNSPKKAQKTNLSPNKNQNNEKNVPRSNGR). A Phosphoserine modification is found at Ser538. 3 disordered regions span residues 577–620 (LNNL…EERV), 736–799 (STNT…SDSK), and 814–871 (AVSP…PQFS). Residues 593 to 608 (FEEKSKDAPIREEYHT) show a composition bias toward basic and acidic residues. Residues 736 to 749 (STNTNDSCADSSKY) are compositionally biased toward polar residues. Residues 750–769 (TADRKLAEPRKISEESKVND) are compositionally biased toward basic and acidic residues. A compositionally biased stretch (polar residues) spans 770 to 796 (DSSSYYSPNINNLPASRMPSQPTYSNS). Residues Ser776 and Ser816 each carry the phosphoserine modification.

Functionally, may play a role in polarity establishment and bud formation. The MSB1 gene may be functionally redundant. In Saccharomyces cerevisiae (strain ATCC 204508 / S288c) (Baker's yeast), this protein is Morphogenesis-related protein MSB1 (MSB1).